Consider the following 908-residue polypeptide: SKI/DACH domain-containing protein 1 (908 aa).

The segment covering 337–353 (HHHHHHHHHHHHHHHRA) has biased composition (basic residues). The tract at residues 337–461 (HHHHHHHHHH…SSSGSSQVSV (125 aa)) is disordered. 2 stretches are compositionally biased toward low complexity: residues 370–389 (PHLG…SSYS) and 396–410 (SDFG…NSVS). Residues 411-429 (SEEEEEEGEEEEEEEEEEG) show a composition bias toward acidic residues. Over residues 449–461 (ESDSSSGSSQVSV) the composition is skewed to low complexity. K688 is covalently cross-linked (Glycyl lysine isopeptide (Lys-Gly) (interchain with G-Cter in SUMO2)). 2 disordered regions span residues 744–763 (ETPS…TLGS) and 792–818 (LQTP…TNEG). Over residues 746–761 (PSLNPLAQSQGLSCTL) the composition is skewed to polar residues.

Belongs to the DACH/dachshund family.

The protein is SKI/DACH domain-containing protein 1 (SKIDA1) of Homo sapiens (Human).